The chain runs to 152 residues: Superoxide dismutase [Cu-Zn] (152 aa).

The Cu cation site is built by His45, His47, and His62. Cysteines 56 and 145 form a disulfide. Residues His62, His70, His79, and Asp82 each contribute to the Zn(2+) site. His119 contacts Cu cation.

This sequence belongs to the Cu-Zn superoxide dismutase family. Homodimer. Cu cation is required as a cofactor. Requires Zn(2+) as cofactor.

It localises to the cytoplasm. The enzyme catalyses 2 superoxide + 2 H(+) = H2O2 + O2. Functionally, destroys radicals which are normally produced within the cells and which are toxic to biological systems. This Brassica oleracea var. capitata (Cabbage) protein is Superoxide dismutase [Cu-Zn] (SODCC).